A 311-amino-acid chain; its full sequence is MTEKSNGMSWLSKITPPGMSKIFSKRDTPDNLWVKCPVSEEMVFHKDLEAGLFVTPAGHHMRIAPAYRFQFTFDGDYTEIETPEVVKDPLKFRDDKPYTAKLAAARKKTGRDDSMAIATGTIGGLDAVVLVQNFAFMGGSLGMAAGESFIKAAETALARKAPMIVFTAAGGARMQEGALSLMQMPRTTLAVEMLREAGLPYIVVLTDPTTGGVTASYAMLGDVHIAEPGALIGFAGPRVIEQTIREKLPEGFQRAEYLLEKGMVDKVVHRADIPATLARMLRVLMKKPGTSMPAALTPPAPDHVVADGGSH.

One can recognise a CoA carboxyltransferase N-terminal domain in the interval 32 to 299 (LWVKCPVSEE…TSMPAALTPP (268 aa)). Residues 291–311 (SMPAALTPPAPDHVVADGGSH) form a disordered region.

It belongs to the AccD/PCCB family. In terms of assembly, acetyl-CoA carboxylase is a heterohexamer composed of biotin carboxyl carrier protein (AccB), biotin carboxylase (AccC) and two subunits each of ACCase subunit alpha (AccA) and ACCase subunit beta (AccD).

The protein localises to the cytoplasm. The catalysed reaction is N(6)-carboxybiotinyl-L-lysyl-[protein] + acetyl-CoA = N(6)-biotinyl-L-lysyl-[protein] + malonyl-CoA. Its pathway is lipid metabolism; malonyl-CoA biosynthesis; malonyl-CoA from acetyl-CoA: step 1/1. In terms of biological role, component of the acetyl coenzyme A carboxylase (ACC) complex. Biotin carboxylase (BC) catalyzes the carboxylation of biotin on its carrier protein (BCCP) and then the CO(2) group is transferred by the transcarboxylase to acetyl-CoA to form malonyl-CoA. This Maricaulis maris (strain MCS10) (Caulobacter maris) protein is Acetyl-coenzyme A carboxylase carboxyl transferase subunit beta.